Consider the following 65-residue polypeptide: MSDLGRKDIGDKIESKLTPDSQKSTPEQFKDKVTDSLDSAAGKATSENDKSFVQKASDAIFGDSK.

Positions 1–17 (MSDLGRKDIGDKIESKL) are enriched in basic and acidic residues. Residues 1 to 32 (MSDLGRKDIGDKIESKLTPDSQKSTPEQFKDK) form a disordered region. A compositionally biased stretch (polar residues) spans 18-27 (TPDSQKSTPE).

The protein to yeast HSP12/GLP1 and S.pombe hsp9.

The sequence is that of White colony protein WHS11 (WHS11) from Candida albicans (strain WO-1) (Yeast).